The primary structure comprises 109 residues: Probable gas vesicle protein J1 (109 aa).

It belongs to the gas vesicle GvpA family. As to quaternary structure, interacts with GvpA.

The protein localises to the gas vesicle. Its function is as follows. A minor component of the gas vesicle, might be involved in nucleating gas vesicle formation. Gas vesicles (GV) are hollow, gas filled proteinaceous nanostructures. It is not clear what function GVs perform in soil bacteria. In Streptomyces coelicolor (strain ATCC BAA-471 / A3(2) / M145), this protein is Probable gas vesicle protein J1 (gvpJ1).